The sequence spans 385 residues: Aspartate carbamoyltransferase 2, chloroplastic (385 aa).

The N-terminal 30 residues, 1-30 (MTASSSLFSCSMHMEVLTPKISKWPKNFVS), are a transit peptide targeting the chloroplast. Residues arginine 131 and threonine 132 each contribute to the carbamoyl phosphate site. The UMP site is built by arginine 131 and threonine 132. Lysine 161 is an L-aspartate binding site. Carbamoyl phosphate is bound by residues arginine 182, histidine 210, and glutamine 213. UMP-binding residues include arginine 182 and histidine 210. Residues arginine 243 and arginine 305 each coordinate UMP. The L-aspartate site is built by arginine 243 and arginine 305. Residues leucine 345 and proline 346 each coordinate carbamoyl phosphate.

It belongs to the aspartate/ornithine carbamoyltransferase superfamily. ATCase family. As to quaternary structure, homotrimer.

The protein resides in the plastid. The protein localises to the chloroplast. The enzyme catalyses carbamoyl phosphate + L-aspartate = N-carbamoyl-L-aspartate + phosphate + H(+). Its pathway is pyrimidine metabolism; UMP biosynthesis via de novo pathway; (S)-dihydroorotate from bicarbonate: step 2/3. Feedback inhibited by UMP. Catalyzes the condensation of carbamoyl phosphate and aspartate to form carbamoyl aspartate and inorganic phosphate, the committed step in the de novo pyrimidine nucleotide biosynthesis pathway. The polypeptide is Aspartate carbamoyltransferase 2, chloroplastic (PYRB2) (Pisum sativum (Garden pea)).